The chain runs to 898 residues: Chitin synthase 1 (898 aa).

The segment at 1–154 (MDPRYGAQPM…PPQQGGGIQR (154 aa)) is disordered. Residues 9-21 (PMPPRRSPSPGHP) show a composition bias toward pro residues. Polar residues-rich tracts occupy residues 64–75 (DHLSLNAAQSVD) and 136–146 (DVPSEQYQDPP). 5 helical membrane passes run 441-461 (SAFGFISVLPGAFSAYRYVAL), 540-560 (RWLNGSFFAAIYAIVHFLDFL), 570-590 (FAFFIEFIFNTINMIFAWFAI), 616-636 (ILGVVFTWLYGVFLITCFVLS), and 651-671 (MCWFWAIIMIYLMFAAVFISV). The N-linked (GlcNAc...) asparagine glycan is linked to N685. The next 4 membrane-spanning stretches (helical) occupy residues 697–717 (MLIISLMSTYGIWLIASLIML), 726–746 (FAQYMLLTPTFTNVLNVYAFC), 825–845 (GVVLLWMVTNFGLAAIVLSSA), and 870–890 (IVLWSVAGLSAFKFIGAMWFL).

The protein belongs to the chitin synthase family. Class I subfamily.

It is found in the cell membrane. The catalysed reaction is [(1-&gt;4)-N-acetyl-beta-D-glucosaminyl](n) + UDP-N-acetyl-alpha-D-glucosamine = [(1-&gt;4)-N-acetyl-beta-D-glucosaminyl](n+1) + UDP + H(+). Polymerizes chitin, a structural polymer of the cell wall and septum, by transferring the sugar moiety of UDP-GlcNAc to the non-reducing end of the growing chitin polymer. Shows additive effects in septum formation with CHS2, CHS3A, CHS4, CHS5, CHS6 and CHS7. Regulates mycelial growth and conidiation. Involved in virulence and mediates mycotoxin deoxinivalenol (DON) biosynthesis via the regulation of the expression of TRI4, TRI5 and TRI6. This Gibberella zeae (strain ATCC MYA-4620 / CBS 123657 / FGSC 9075 / NRRL 31084 / PH-1) (Wheat head blight fungus) protein is Chitin synthase 1.